A 130-amino-acid polypeptide reads, in one-letter code: Cytochrome c oxidase subunit 13, mitochondrial (130 aa).

Residues 1–31 (MSMMNRNIGFLSRTLKTSVPKRAGLLSFRAY) constitute a mitochondrion transit peptide. The Mitochondrial matrix segment spans residues 32–61 (SNEAKVNWLEEVQAEEEHAKRSSEFWKKVT). A helical transmembrane segment spans residues 62-80 (YYIGGPALILASANAYYIY). The Mitochondrial intermembrane portion of the chain corresponds to 81–130 (CKHQEHAKHVEDTDPGYSFENLRFKKYPWGDGSKTLFWNDKVNHLKKDDE).

This sequence belongs to the cytochrome c oxidase subunit 6A family. As to quaternary structure, component of the cytochrome c oxidase (complex IV, CIV), a multisubunit enzyme composed of a catalytic core of 3 subunits and several supernumerary subunits. The complex exists as a monomer or a dimer and forms supercomplexes (SCs) in the inner mitochondrial membrane with ubiquinol-cytochrome c oxidoreductase (cytochrome b-c1 complex, complex III, CIII).

Its subcellular location is the mitochondrion inner membrane. It functions in the pathway energy metabolism; oxidative phosphorylation. Component of the cytochrome c oxidase, the last enzyme in the mitochondrial electron transport chain which drives oxidative phosphorylation. The respiratory chain contains 3 multisubunit complexes succinate dehydrogenase (complex II, CII), ubiquinol-cytochrome c oxidoreductase (cytochrome b-c1 complex, complex III, CIII) and cytochrome c oxidase (complex IV, CIV), that cooperate to transfer electrons derived from NADH and succinate to molecular oxygen, creating an electrochemical gradient over the inner membrane that drives transmembrane transport and the ATP synthase. Cytochrome c oxidase is the component of the respiratory chain that catalyzes the reduction of oxygen to water. Electrons originating from reduced cytochrome c in the intermembrane space (IMS) are transferred via the dinuclear copper A center (CU(A)) of subunit 2 and heme A of subunit 1 to the active site in subunit 1, a binuclear center (BNC) formed by heme A3 and copper B (CU(B)). The BNC reduces molecular oxygen to 2 water molecules unsing 4 electrons from cytochrome c in the IMS and 4 protons from the mitochondrial matrix. The polypeptide is Cytochrome c oxidase subunit 13, mitochondrial (cox13) (Schizosaccharomyces pombe (strain 972 / ATCC 24843) (Fission yeast)).